Consider the following 407-residue polypeptide: Imidazolonepropionase (407 aa).

Residues His75 and His77 each contribute to the Fe(3+) site. Residues His75 and His77 each coordinate Zn(2+). 4-imidazolone-5-propanoate is bound by residues Arg84, Tyr142, and His169. Tyr142 is a binding site for N-formimidoyl-L-glutamate. Fe(3+) is bound at residue His232. His232 is a Zn(2+) binding site. Gln235 serves as a coordination point for 4-imidazolone-5-propanoate. Asp306 serves as a coordination point for Fe(3+). Position 306 (Asp306) interacts with Zn(2+). N-formimidoyl-L-glutamate-binding residues include Asn308 and Gly310. 4-imidazolone-5-propanoate is bound at residue Thr311.

Belongs to the metallo-dependent hydrolases superfamily. HutI family. Zn(2+) serves as cofactor. Requires Fe(3+) as cofactor.

The protein resides in the cytoplasm. It catalyses the reaction 4-imidazolone-5-propanoate + H2O = N-formimidoyl-L-glutamate. The protein operates within amino-acid degradation; L-histidine degradation into L-glutamate; N-formimidoyl-L-glutamate from L-histidine: step 3/3. Functionally, catalyzes the hydrolytic cleavage of the carbon-nitrogen bond in imidazolone-5-propanoate to yield N-formimidoyl-L-glutamate. It is the third step in the universal histidine degradation pathway. This is Imidazolonepropionase from Rhodococcus jostii (strain RHA1).